Consider the following 320-residue polypeptide: Aspartate carbamoyltransferase catalytic subunit (320 aa).

Residues R53 and T54 each coordinate carbamoyl phosphate. K82 provides a ligand contact to L-aspartate. Carbamoyl phosphate contacts are provided by R103, H131, and Q134. The L-aspartate site is built by R164 and R227. 2 residues coordinate carbamoyl phosphate: L266 and P267.

The protein belongs to the aspartate/ornithine carbamoyltransferase superfamily. ATCase family. Heterododecamer (2C3:3R2) of six catalytic PyrB chains organized as two trimers (C3), and six regulatory PyrI chains organized as three dimers (R2).

The enzyme catalyses carbamoyl phosphate + L-aspartate = N-carbamoyl-L-aspartate + phosphate + H(+). It functions in the pathway pyrimidine metabolism; UMP biosynthesis via de novo pathway; (S)-dihydroorotate from bicarbonate: step 2/3. In terms of biological role, catalyzes the condensation of carbamoyl phosphate and aspartate to form carbamoyl aspartate and inorganic phosphate, the committed step in the de novo pyrimidine nucleotide biosynthesis pathway. This chain is Aspartate carbamoyltransferase catalytic subunit, found in Bifidobacterium longum (strain NCC 2705).